The following is a 156-amino-acid chain: Snaclec A4 (156 aa).

A signal peptide spans 1–23; sequence MGRSISVSFGLLVVFLSLSGTGA. Cys-27 and Cys-38 are oxidised to a cystine. A C-type lectin domain is found at 34 to 155; that stretch reads HEGHCYKVFN…CGQPYRFTCE (122 aa). The N-linked (GlcNAc...) asparagine glycan is linked to Asn-45. 2 cysteine pairs are disulfide-bonded: Cys-55-Cys-154 and Cys-129-Cys-146.

This sequence belongs to the snaclec family. In terms of assembly, heterodimer; disulfide-linked. As to expression, expressed by the venom gland.

The protein resides in the secreted. Interferes with one step of hemostasis (modulation of platelet aggregation, or coagulation cascade, for example). This Macrovipera lebetinus (Levantine viper) protein is Snaclec A4.